Reading from the N-terminus, the 920-residue chain is Isoleucine--tRNA ligase (920 aa).

Positions 57 to 67 (PYANGDIHLGH) match the 'HIGH' region motif. Glu560 contacts L-isoleucyl-5'-AMP. The short motif at 601–605 (KMSKS) is the 'KMSKS' region element. Lys604 is a binding site for ATP. Positions 890, 893, 910, and 913 each coordinate Zn(2+).

It belongs to the class-I aminoacyl-tRNA synthetase family. IleS type 1 subfamily. Monomer. Zn(2+) serves as cofactor.

The protein localises to the cytoplasm. The catalysed reaction is tRNA(Ile) + L-isoleucine + ATP = L-isoleucyl-tRNA(Ile) + AMP + diphosphate. Functionally, catalyzes the attachment of isoleucine to tRNA(Ile). As IleRS can inadvertently accommodate and process structurally similar amino acids such as valine, to avoid such errors it has two additional distinct tRNA(Ile)-dependent editing activities. One activity is designated as 'pretransfer' editing and involves the hydrolysis of activated Val-AMP. The other activity is designated 'posttransfer' editing and involves deacylation of mischarged Val-tRNA(Ile). This is Isoleucine--tRNA ligase from Caldicellulosiruptor saccharolyticus (strain ATCC 43494 / DSM 8903 / Tp8T 6331).